Reading from the N-terminus, the 107-residue chain is Death-associated protein-like 1 (107 aa).

The disordered stretch occupies residues 1–23 (MANEVQDLLSPRKGGHPPAVKAG).

In terms of tissue distribution, expressed in hair follicle (at protein level).

May play a role in the early stages of epithelial differentiation or in apoptosis. The polypeptide is Death-associated protein-like 1 (DAPL1) (Homo sapiens (Human)).